The sequence spans 840 residues: Lon protease homolog 2, peroxisomal (840 aa).

A Lon N-terminal domain is found at 13–222; sequence LPLLCTHDGV…KALPLLTRQI (210 aa). Residue 375 to 382 participates in ATP binding; the sequence is GPPGVGKT. The tract at residues 583 to 606 is disordered; sequence QKVSRSEAPTEQHAEQNTDSKVED. Over residues 584–606 the composition is skewed to basic and acidic residues; sequence KVSRSEAPTEQHAEQNTDSKVED. Residues 641–825 enclose the Lon proteolytic domain; that stretch reads LTLPGVAIGL…DEVLNAAFDG (185 aa). Catalysis depends on residues Ser-731 and Lys-774. Positions 838 to 840 match the Microbody targeting signal motif; the sequence is SKL.

The protein belongs to the peptidase S16 family.

The protein resides in the peroxisome matrix. It carries out the reaction Hydrolysis of proteins in presence of ATP.. Its function is as follows. ATP-dependent serine protease that mediates the selective degradation of misfolded and unassembled polypeptides in the peroxisomal matrix. Necessary for type 2 peroxisome targeting signal (PTS2)-containing protein processing and facilitates peroxisome matrix protein import. The sequence is that of Lon protease homolog 2, peroxisomal (lonp2) from Danio rerio (Zebrafish).